A 352-amino-acid polypeptide reads, in one-letter code: Nicotinate-nucleotide--dimethylbenzimidazole phosphoribosyltransferase (352 aa).

Residue glutamate 318 is the Proton acceptor of the active site.

Belongs to the CobT family.

The catalysed reaction is 5,6-dimethylbenzimidazole + nicotinate beta-D-ribonucleotide = alpha-ribazole 5'-phosphate + nicotinate + H(+). Its pathway is nucleoside biosynthesis; alpha-ribazole biosynthesis; alpha-ribazole from 5,6-dimethylbenzimidazole: step 1/2. In terms of biological role, catalyzes the synthesis of alpha-ribazole-5'-phosphate from nicotinate mononucleotide (NAMN) and 5,6-dimethylbenzimidazole (DMB). The chain is Nicotinate-nucleotide--dimethylbenzimidazole phosphoribosyltransferase from Dehalococcoides mccartyi (strain ATCC BAA-2100 / JCM 16839 / KCTC 5957 / BAV1).